The chain runs to 213 residues: Thymidylate kinase (213 aa).

Position 11–18 (11–18 (GGEGAGKT)) interacts with ATP.

The protein belongs to the thymidylate kinase family.

The enzyme catalyses dTMP + ATP = dTDP + ADP. In terms of biological role, phosphorylation of dTMP to form dTDP in both de novo and salvage pathways of dTTP synthesis. The sequence is that of Thymidylate kinase from Shouchella clausii (strain KSM-K16) (Alkalihalobacillus clausii).